The sequence spans 218 residues: Small ribosomal subunit protein uS3c (218 aa).

In terms of domain architecture, KH type-2 spans 47–118; sequence VQKNMKTSSG…KLNIAITRIE (72 aa).

It belongs to the universal ribosomal protein uS3 family. Part of the 30S ribosomal subunit.

It is found in the plastid. The protein resides in the chloroplast. This is Small ribosomal subunit protein uS3c (rps3) from Helianthus annuus (Common sunflower).